Here is a 205-residue protein sequence, read N- to C-terminus: Protein phosphatase inhibitor 2 (205 aa).

Positions 1-44 (MAASTASHRPIKGILKNKTSTTSSMVASAEQPRGNVDEELSKKS) are disordered. A2 carries the N-acetylalanine modification. Required for binding PPP1CC stretches follow at residues 12-17 (KGILKN) and 43-55 (KSQKWDEMNILAT). Over residues 17–26 (NKTSTTSSMV) the composition is skewed to polar residues. Residues 35 to 44 (NVDEELSKKS) are compositionally biased toward basic and acidic residues. Residue S44 is modified to Phosphoserine; by ATM. At T73 the chain carries Phosphothreonine; by GSK3. Residue S87 is modified to Phosphoserine. Phosphothreonine is present on residues T89 and T92. Residues 111 to 142 (EPKYRIQEQESSGEEDSDLSPEEREKKRQFEM) form a disordered region. S121, S122, S127, and S130 each carry phosphoserine. A compositionally biased stretch (acidic residues) spans 121–130 (SSGEEDSDLS). Positions 131–142 (PEEREKKRQFEM) are enriched in basic and acidic residues. Residues 147 to 150 (HYNE) form a required for binding PPP1CC catalytic center, displacing metal ions and inhibition of PPP1CC catalytic activity region. The tract at residues 163–205 (KDLHDDDEDEEMLETADGESMNTEESNQGSTPSDQQQNKLRSS) is disordered. Over residues 167–179 (DDDEDEEMLETAD) the composition is skewed to acidic residues. Positions 182–205 (SMNTEESNQGSTPSDQQQNKLRSS) are enriched in polar residues.

It belongs to the protein phosphatase inhibitor 2 family. As to quaternary structure, heterodimer with PP1. In terms of processing, phosphorylation on Thr-73 by GSK3 activates PP1 by dissociating the PP1-PPP1R2 complex. Phosphorylation on Ser-44 by ATM activates PP1 by dissociating the PP1-PPP1R2 complex.

Functionally, inhibitor of protein-phosphatase 1. The protein is Protein phosphatase inhibitor 2 (PPP1R2) of Homo sapiens (Human).